The primary structure comprises 271 residues: Neurexophilin-1 (271 aa).

The signal sequence occupies residues 1-21 (MQAACWYVLLLLQPTIYLVTC). The interval 22 to 97 (ANLTNGGKSE…WDWLRNSTDL (76 aa)) is II. N-linked (GlcNAc...) asparagine glycans are attached at residues Asn23, Asn68, Asn93, Asn146, Asn156, and Asn162. An III region spans residues 98–176 (QEPRPRAKRR…LVPPTKIVEF (79 aa)). An IV (linker domain) region spans residues 177–185 (DLAQQTVID). The segment at 186–271 (AKDSKSFNCR…HSDTPYFPSG (86 aa)) is v (Cys-rich).

This sequence belongs to the neurexophilin family.

The protein resides in the secreted. Functionally, may be signaling molecules that resemble neuropeptides and that act by binding to alpha-neurexins and possibly other receptors. This chain is Neurexophilin-1 (NXPH1), found in Pongo abelii (Sumatran orangutan).